The sequence spans 178 residues: Cytidylate kinase (178 aa).

7-15 (GLPGTGTTT) is an ATP binding site.

Belongs to the cytidylate kinase family. Type 2 subfamily.

Its subcellular location is the cytoplasm. It catalyses the reaction CMP + ATP = CDP + ADP. The enzyme catalyses dCMP + ATP = dCDP + ADP. In Methanococcus maripaludis (strain DSM 14266 / JCM 13030 / NBRC 101832 / S2 / LL), this protein is Cytidylate kinase.